The following is a 151-amino-acid chain: Probable desiccation-related protein LEA14 (151 aa).

Belongs to the LEA type 2 family.

The polypeptide is Probable desiccation-related protein LEA14 (LEA14) (Arabidopsis thaliana (Mouse-ear cress)).